A 1020-amino-acid chain; its full sequence is Mastermind-like protein 1 (1020 aa).

A required for interaction with NOTCH proteins region spans residues 1–97 (MVLPTCPMAE…PAPASAPAAA (97 aa)). The residue at position 45 (serine 45) is a Phosphoserine. Basic residues predominate over residues 67–76 (KAKRAGKHRQ). Residues 67–191 (KAKRAGKHRQ…TAGKHSLGLD (125 aa)) form a disordered region. Residues 77 to 99 (PPAAATAPVAAPAPASAPAAARL) show a composition bias toward low complexity. The span at 100 to 122 (DAADGPEHGRPVAHLHDTVKRSL) shows a compositional bias: basic and acidic residues. Residues 124–133 (SAASPQNGDQ) show a composition bias toward polar residues. Serine 127, serine 310, serine 321, and serine 367 each carry phosphoserine. 6 disordered regions span residues 335–522 (GASS…YGNT), 575–598 (PFRSLVPPGQEQNPSSVPVAAPAA), 663–686 (EKQQFQRHLTRPPPQYQDPTQSTF), 725–748 (SMGPGHAPVSSLPSSSGQQDRGVA), 794–866 (QNAS…NPFT), and 888–959 (AMPS…RPGL). Polar residues predominate over residues 344 to 369 (DSPSLGSSQTLFHTTSQPGVDNSSPN). Positions 373–383 (ASAQAQSAQRA) are enriched in low complexity. Over residues 399–410 (ELSSAHQLQQIA) the composition is skewed to polar residues. The span at 419–435 (LQNPQQAAPAPGPGQLA) shows a compositional bias: low complexity. Positions 491–515 (PSHSNLLSHQSPSNLNQNPVNNQGS) are enriched in polar residues. Over residues 588–598 (PSSVPVAAPAA) the composition is skewed to low complexity. Residues 794–818 (QNASTSAAYGQNSLGSASLSQQHSK) show a composition bias toward polar residues. Lysine 827 carries the post-translational modification N6-acetyllysine. A compositionally biased stretch (polar residues) spans 837 to 864 (MGSQNASWQHQGMPNLSSQTSGNSSVNP). Positions 911 to 920 (SAQQRNSAPA) are enriched in low complexity. Residue serine 1019 is modified to Phosphoserine.

This sequence belongs to the mastermind family. As to quaternary structure, interacts (via N-terminus) with NOTCH1, NOTCH2, NOTCH3 and NOTCH4 (via ankyrin repeat region). Interacts (via N-terminus) with p53 (via DNA-binding region). Forms a DNA-binding complex with Notch proteins and RBPSUH/RBP-J kappa/CBF1. Also binds CREBBP/CBP and CDK8. Forms a complex with PRAG1, NOTCH1 and MAML1, in a MAML1-dependent manner. As to expression, at E9.5, strongly expressed in the telencephalon, first branchial arch, forelimb buds and somites. By 10.5 dpc, continuously expressed in brain and spinal cord. Also expressed in first and second branchial arches and limb buds. By 11.5 dpc, expression in CNS is weak but increases in mesodermal tissues. At 14.5 dpc, detected in epithelial cells in trachea, esophagus and proximal and distal tubules of the developing lungs.

It is found in the nucleus speckle. Its function is as follows. Acts as a transcriptional coactivator for NOTCH proteins. Has been shown to amplify NOTCH-induced transcription of HES1. Enhances phosphorylation and proteolytic turnover of the NOTCH intracellular domain in the nucleus through interaction with CDK8. Binds to CREBBP/CBP which promotes nucleosome acetylation at NOTCH enhancers and activates transcription. Induces phosphorylation and localization of CREBBP to nuclear foci. Plays a role in hematopoietic development by regulating NOTCH-mediated lymphoid cell fate decisions. The polypeptide is Mastermind-like protein 1 (Mus musculus (Mouse)).